The primary structure comprises 275 residues: Phosphate import ATP-binding protein PstB 1 (275 aa).

The ABC transporter domain maps to 22-261; it reads LETQAVSVYY…NRTEKIFNSP (240 aa). 54–61 is a binding site for ATP; that stretch reads GPSGCGKS.

This sequence belongs to the ABC transporter superfamily. Phosphate importer (TC 3.A.1.7) family. As to quaternary structure, the complex is composed of two ATP-binding proteins (PstB), two transmembrane proteins (PstC and PstA) and a solute-binding protein (PstS).

Its subcellular location is the cell inner membrane. The enzyme catalyses phosphate(out) + ATP + H2O = ADP + 2 phosphate(in) + H(+). Functionally, part of the ABC transporter complex PstSACB involved in phosphate import. Responsible for energy coupling to the transport system. In Synechococcus sp. (strain JA-2-3B'a(2-13)) (Cyanobacteria bacterium Yellowstone B-Prime), this protein is Phosphate import ATP-binding protein PstB 1.